The following is a 616-amino-acid chain: Chaperone protein HscA (616 aa).

The protein belongs to the heat shock protein 70 family.

In terms of biological role, chaperone involved in the maturation of iron-sulfur cluster-containing proteins. Has a low intrinsic ATPase activity which is markedly stimulated by HscB. Involved in the maturation of IscU. The sequence is that of Chaperone protein HscA from Cronobacter sakazakii (strain ATCC BAA-894) (Enterobacter sakazakii).